The chain runs to 412 residues: Adipocyte plasma membrane-associated protein (412 aa).

The segment at 1 to 32 (MTEADGLRQRRPLRPQVVTDDNRTPEAKGGSS) is disordered. Over 1–39 (MTEADGLRQRRPLRPQVVTDDNRTPEAKGGSSFSGRVFR) the chain is Cytoplasmic. T19 carries the post-translational modification Phosphothreonine. A helical membrane pass occupies residues 40–60 (ATFLMLAAFLTIPLLGALVLL). Topologically, residues 61–412 (DSPIDPEPLS…RAPYLCRLRL (352 aa)) are extracellular. N-linked (GlcNAc...) asparagine glycosylation is present at N159.

Belongs to the strictosidine synthase family.

The protein localises to the membrane. In terms of biological role, exhibits strong arylesterase activity with beta-naphthyl acetate and phenyl acetate. May play a role in adipocyte differentiation. The protein is Adipocyte plasma membrane-associated protein (APMAP) of Bos taurus (Bovine).